The following is a 209-amino-acid chain: Ribosomal RNA large subunit methyltransferase E (209 aa).

Gly63, Trp65, Asp83, Asp99, and Asp124 together coordinate S-adenosyl-L-methionine. Lys164 functions as the Proton acceptor in the catalytic mechanism.

The protein belongs to the class I-like SAM-binding methyltransferase superfamily. RNA methyltransferase RlmE family.

It is found in the cytoplasm. The catalysed reaction is uridine(2552) in 23S rRNA + S-adenosyl-L-methionine = 2'-O-methyluridine(2552) in 23S rRNA + S-adenosyl-L-homocysteine + H(+). Its function is as follows. Specifically methylates the uridine in position 2552 of 23S rRNA at the 2'-O position of the ribose in the fully assembled 50S ribosomal subunit. The sequence is that of Ribosomal RNA large subunit methyltransferase E from Serratia proteamaculans (strain 568).